The following is a 906-amino-acid chain: Formin-like protein 18 (906 aa).

Positions 1 to 25 (MSKLRWLIMAFLVCLLLLTPKDLEG) are cleaved as a signal peptide. Residues 120 to 140 (MVVVGLSAACVALVTLVGICF) form a helical membrane-spanning segment. 2 disordered regions span residues 267 to 416 (AGGG…QADP) and 854 to 906 (NAKA…DSDD). Residues 274-292 (AAPPPPAGPPPPAPPPLPP) are compositionally biased toward pro residues. A compositionally biased stretch (basic residues) spans 293-303 (SHHHHHGHHPP). 3 stretches are compositionally biased toward pro residues: residues 320 to 339 (APPP…PAPS), 348 to 375 (GPPP…PPPG), and 383 to 402 (GPPP…PPFK). Low complexity-rich tracts occupy residues 403–416 (KSPG…QADP) and 854–877 (NAKA…QSSF). Residues 411–866 (AAQADPNKAK…AKKQQQPTPA (456 aa)) form the FH2 domain. Positions 878–889 (RDPRQQIQDRRA) are enriched in basic and acidic residues. The span at 897-906 (SSSSSSDSDD) shows a compositional bias: low complexity.

The protein belongs to the formin-like family. Class-I subfamily.

The protein localises to the membrane. This Oryza sativa subsp. japonica (Rice) protein is Formin-like protein 18 (FH18).